Here is a 292-residue protein sequence, read N- to C-terminus: Triplex capsid protein 2 (292 aa).

Belongs to the herpesviridae TRX2 protein family. As to quaternary structure, interacts with TRX1 and major capisd protein/MCP.

It localises to the virion. Its subcellular location is the host nucleus. In terms of biological role, structural component of the T=16 icosahedral capsid. The capsid is composed of pentamers and hexamers of major capsid protein/MCP, which are linked together by heterotrimers called triplexes. These triplexes are formed by a single molecule of triplex protein 1/TRX1 and two copies of triplex protein 2/TRX2. Additionally, TRX1 is required for efficient transport of TRX2 to the nucleus, which is the site of capsid assembly. This is Triplex capsid protein 2 from Elephas maximus (Indian elephant).